The primary structure comprises 529 residues: 3-ketoacyl-CoA synthase 20 (529 aa).

The segment at 1–22 (MSHNQNQPHRPVPVHVTNAEPN) is disordered. The next 2 helical transmembrane spans lie at 52-72 (LYIL…SFTI) and 84-104 (FHFL…TAYF). The FAE domain occupies 103–396 (YFTTRPRRVF…FFATLVARKV (294 aa)). Active-site residues include Cys247, His326, His415, His419, and Asn452.

This sequence belongs to the thiolase-like superfamily. Chalcone/stilbene synthases family. Expressed in aerial organs. Expressed in leaves, flowers, siliques and stems. Expressed in roots, young seedlings, leaves, flowers and siliques.

It is found in the membrane. It catalyses the reaction a very-long-chain acyl-CoA + malonyl-CoA + H(+) = a very-long-chain 3-oxoacyl-CoA + CO2 + CoA. The protein operates within lipid metabolism; fatty acid biosynthesis. With respect to regulation, inhibited by K3 herbicides such as alachlor, allidochlor, anilofos, cafenstrole, fentrazamide and flufenacet. Strongly inhibited by metazachlor and only slightly by mefluidide. In terms of biological role, mediates the synthesis of VLCFAs from 22 to 26 carbons in length (e.g. C22, C24, C26). Functionally redundant with KCS2 in the two-carbon elongation of C22 fatty acids that is required for cuticular wax and root suberin biosynthesis. This is 3-ketoacyl-CoA synthase 20 from Arabidopsis thaliana (Mouse-ear cress).